Here is a 121-residue protein sequence, read N- to C-terminus: Cell division protein FtsB (121 aa).

Topologically, residues 1–6 (MRNWRW) are cytoplasmic. A helical transmembrane segment spans residues 7 to 24 (LLLVLAVLLAWLQYRFWF). The Periplasmic portion of the chain corresponds to 25–121 (GPGNSGEVMM…PEPIDPVDHP (97 aa)). Residues 31 to 66 (EVMMLEAQVAHQTQDNEGLRQRNQALAAEVKDLKDG) adopt a coiled-coil conformation. The tract at residues 92–121 (EDAPLPAPASPEAPAPPQQAPEPIDPVDHP) is disordered. Positions 96–115 (LPAPASPEAPAPPQQAPEPI) are enriched in pro residues.

This sequence belongs to the FtsB family. As to quaternary structure, part of a complex composed of FtsB, FtsL and FtsQ.

Its subcellular location is the cell inner membrane. Functionally, essential cell division protein. May link together the upstream cell division proteins, which are predominantly cytoplasmic, with the downstream cell division proteins, which are predominantly periplasmic. In Xanthomonas euvesicatoria pv. vesicatoria (strain 85-10) (Xanthomonas campestris pv. vesicatoria), this protein is Cell division protein FtsB.